The primary structure comprises 380 residues: GATOR1 complex protein NPRL2 (380 aa).

The tract at residues 1-133 is interaction with PDPK1; that stretch reads MGSGCRIECI…SKQKLVPIMT (133 aa). Arg-78 contributes to the GDP binding site. Asymmetric dimethylarginine is present on Arg-78. Glycyl lysine isopeptide (Lys-Gly) (interchain with G-Cter in ubiquitin) cross-links involve residues Lys-158 and Lys-357.

The protein belongs to the NPR2 family. Within the GATOR complex, component of the GATOR1 subcomplex, made of DEPDC5, NPRL2 and NPRL3. GATOR1 mediates the strong interaction of the GATOR complex with small GTPases Rag (RagA/RRAGA, RagB/RRAGB, RagC/RRAGC and/or RagD/RRAGD) heterodimers. GATOR1 interacts with GPR155/LYCHOS; interaction takes place in presence of cholesterol and prevents interaction between GATOR1 and KICSTOR. Interacts with PDPK1. Post-translationally, in the presence of abundant amino acids, ubiquitinated at Lys-158 and Lys-357 via 'Lys-6'-linked ubiquitination by the WDR24 component of the GATOR2 complex, thereby inhibiting the GATOR1 complex and promoting mTORC1 activation. In terms of processing, asymmetric dimethylation at Arg-78 by PRMT1 inhibits the GTPase activator activity of the GATOR1 complex and consequently inducing timely mTORC1 activation under methionine-sufficient conditions. Most abundant in skeletal muscle, followed by brain, liver and pancreas, with lower amounts in lung, kidney, placenta and heart. Expressed in the frontal lobe cortex as well as in the temporal, parietal, and occipital lobes. Expressed in most lung cancer cell lines tested.

Its subcellular location is the lysosome membrane. Its function is as follows. Catalytic component of the GATOR1 complex, a multiprotein complex that functions as an inhibitor of the amino acid-sensing branch of the mTORC1 pathway. In response to amino acid depletion, the GATOR1 complex has GTPase activating protein (GAP) activity and strongly increases GTP hydrolysis by RagA/RRAGA (or RagB/RRAGB) within heterodimeric Rag complexes, thereby turning them into their inactive GDP-bound form, releasing mTORC1 from lysosomal surface and inhibiting mTORC1 signaling. In the presence of abundant amino acids, the GATOR1 complex is ubiquitinated and inhibited by GATOR2. Within the GATOR1 complex, NPRL2 constitutes the catalytic subunit that mediates the GTPase activator activity and under methionine-sufficient conditions, the GTPase activator activity is inhibited by PRMT1 through methylation and consequently inducing timely mTORC1 activation. In terms of biological role, suppresses Src-dependent tyrosine phosphorylation and activation of PDPK1 and its downstream signaling. Down-regulates PDPK1 kinase activity by interfering with tyrosine phosphorylation at 'Tyr-9', 'Tyr-373' and 'Tyr-376' residues. May act as a tumor suppressor. Suppresses cell growth and enhances sensitivity to various anticancer drugs. This chain is GATOR1 complex protein NPRL2, found in Homo sapiens (Human).